The following is an 800-amino-acid chain: Ent-copalyl diphosphate synthase 2 (800 aa).

The interval Gln-52 to Ala-80 is disordered. The span at Glu-55–Arg-69 shows a compositional bias: basic and acidic residues. Residue Lys-242 participates in substrate binding. The Mg(2+) site is built by Asp-374 and Asp-376. The DXDD motif signature appears at Asp-374–Asp-377. Lys-461 contributes to the substrate binding site.

It belongs to the terpene synthase family. The cofactor is Mg(2+).

It catalyses the reaction (2E,6E,10E)-geranylgeranyl diphosphate = ent-copalyl diphosphate. Its function is as follows. Catalyzes the conversion of geranylgeranyl diphosphate to the phytoalexin precursor ent-copalyl diphosphate. The polypeptide is Ent-copalyl diphosphate synthase 2 (CPS2) (Oryza sativa subsp. indica (Rice)).